The primary structure comprises 723 residues: MSKQGDDCYFYFYSTCNKGDNCPFRHCEAALGNETICTLWKEGRCFRNVCRFRHMEIDKKRSEIPCFWENQPGGCQKSNCAFHHTKGRYVDGLFLPPSKTTLPSPPESADDDLKAAQITLQQNKLSVQSNPSPQLRGVMKVENSENVPSPTHPPVVINAADDDEDDDDQLSEEGEETKTPVQQPAEENHNGLRIISTRKSNADTKQDDSLNFGIKTLEEIKLKKQKEKTKKQSEGPSGVPAHPLQSRTVPVPEKENVRTVVRTVTLSAKQGEEPVIRLNIAEKPGKRKGSVADVSGLPLKRSLAERLGRKIEVDKAPRREKGAKPAGEIHVKTLEEIRLERANQRGETLTAPQAEVCCKVEDPSSGVRPPPAVRIKTFSEALAERKQRRLEEEKQKLEEFLTEKRAEGERKKQRILPPSVPGKVKLEEPTRKIKPLEEVHIKTLEEIKQEKALRMQQSGENVPAPAAQPGPAPAGRKLLRITKLAAPGKEEKKTVELSRASPKAVSAPAEPSNQSAPNSKAQVKSLEGTVKEKLQLRQPEKLKKEVAAVPSATEETVKAKCKVCVKPSDSKASTPTKRALKRKAAEISPSAVAAVKPLSSTETEEPPAKKAALTAAPALPEDSLLTKPGVEKPPSSLELQLGSQADSVEQSGDSSSASASSQSVAKAQQLSSTGAGKAPLSVEDDFEKLIWEISGGKLEAEIDLDPGKDEDDLLLELSEMIDS.

3 C3H1-type zinc fingers span residues 2–29, 31–57, and 60–87; these read SKQG…HCEA, LGNE…HMEI, and KRSE…HTKG. 5 disordered regions span residues 142–208, 223–256, 404–428, 450–526, and 565–681; these read ENSE…KQDD, KKQK…EKEN, KRAE…KLEE, EKAL…VKSL, and VKPS…APLS. The span at 160–175 shows a compositional bias: acidic residues; it reads ADDDEDDDDQLSEEGE. Positions 376–411 form a coiled coil; it reads KTFSEALAERKQRRLEEEKQKLEEFLTEKRAEGERK. Residues 511 to 522 show a composition bias toward polar residues; sequence PSNQSAPNSKAQ. Positions 609-620 are enriched in low complexity; sequence KKAALTAAPALP. Residues 637–649 are compositionally biased toward polar residues; sequence LELQLGSQADSVE. Over residues 650 to 672 the composition is skewed to low complexity; that stretch reads QSGDSSSASASSQSVAKAQQLSS.

Its subcellular location is the nucleus speckle. In terms of biological role, through its association with TREX complex components, may participate in the export and post-transcriptional coordination of selected mRNA transcripts. Binds RNA. This is Zinc finger CCCH domain-containing protein 11A (ZC3H11A) from Gallus gallus (Chicken).